The sequence spans 358 residues: MPKVSSDTLWDIAAAEVRSRESRTDEEEAEEEDAHFPSQRTVFFMGSKAGGKTTILLRFLERDETAKPTLALEYTFGRRARGHNTPKDIAHLWELGGGISLSDLVQIPITADNVSFLSVVLVLDLSKPNALWETMESLLGSARNQVEKVCAALQKTGESRSGKQRVPRVLHKDYPDRELISPFPVPLLIVGSKFDIFQDFDSEKRKVICKTLRFLAHFYGASLIFTSSKSETTMSKSRSFINQLAFGTERPKSISTDPSKPLAIPAGSDSLSQIGPPVATEVDIGTLHAKNPFDLWKKVFEKVFPHESTRERKELKDPVKDPQFSEPLIDSIRAQKDQELDQYKREQAKSWKSLALDP.

2 disordered regions span residues 1-35 (MPKV…EDAH) and 307-358 (ESTR…ALDP). The span at 24–33 (TDEEEAEEED) shows a compositional bias: acidic residues. Composition is skewed to basic and acidic residues over residues 307-320 (ESTR…DPVK) and 333-349 (RAQK…EQAK).

This sequence belongs to the dynein light intermediate chain family. In terms of assembly, light intermediate chain of the cytoplasmic dynein complex 2, a multisubunit complex composed at least of eleven different proteins. The cytoplasmic dynein 2 complex consists of two catalytic heavy chains (HCs) and a number of non-catalytic subunits presented by intermediate chains (ICs), light intermediate chains (LICs) and light chains (LCs). Among them, a heavy chain (DYNC2H1), two intermediate chains (DYNC2I2 and DYNC2I1), a light intermediate chain (DYNC2LI1), and a light chain (DYNLT2B) are unique to the dynein-2 complex, but a subset of light chains are also shared by dynein-1 and dynein-2 complexes. Dynein-2 complex is built around two copies of cytoplasmic dynein 2 heavy chain 1 (DYNC2H1). The C-terminal region forms the motor domain, which converts the energy from ATP hydrolysis into movement. Its N-terminal region forms the tail, an extended structure that binds the other subunits and holds the two heavy chains in a homodimer.

Its subcellular location is the cytoplasm. It is found in the cell projection. The protein localises to the cilium. The protein resides in the cytoskeleton. It localises to the cilium basal body. Its subcellular location is the cilium axoneme. It is found in the microtubule organizing center. The protein localises to the centrosome. In terms of biological role, acts as one of several non-catalytic accessory components of the cytoplasmic dynein 2 complex (dynein-2 complex), a motor protein complex that drives the movement of cargos along microtubules within cilia and flagella in concert with the intraflagellar transport (IFT) system, facilitating the assembly of these organelles. The protein is Cytoplasmic dynein 2 light intermediate chain 1 (dync2li1) of Danio rerio (Zebrafish).